The following is a 201-amino-acid chain: Ribonuclease HII (201 aa).

One can recognise an RNase H type-2 domain in the interval 15 to 201 (AIIAGVDEAG…FAPIKAYGAP (187 aa)). A divalent metal cation-binding residues include Asp-21, Glu-22, and Asp-113.

It belongs to the RNase HII family. Mn(2+) serves as cofactor. It depends on Mg(2+) as a cofactor.

It is found in the cytoplasm. The catalysed reaction is Endonucleolytic cleavage to 5'-phosphomonoester.. In terms of biological role, endonuclease that specifically degrades the RNA of RNA-DNA hybrids. The polypeptide is Ribonuclease HII (Bordetella pertussis (strain Tohama I / ATCC BAA-589 / NCTC 13251)).